Here is a 241-residue protein sequence, read N- to C-terminus: Large ribosomal subunit protein uL2 (241 aa).

Positions 200–241 (AVDHPHGGGNRQHPGRPTTISRHAPAGRKVGSIAAKRTGKRR) are disordered.

The protein belongs to the universal ribosomal protein uL2 family. In terms of assembly, part of the 50S ribosomal subunit. Forms a bridge to the 30S subunit in the 70S ribosome.

Functionally, one of the primary rRNA binding proteins. Required for association of the 30S and 50S subunits to form the 70S ribosome, for tRNA binding and peptide bond formation. It has been suggested to have peptidyltransferase activity; this is somewhat controversial. Makes several contacts with the 16S rRNA in the 70S ribosome. This is Large ribosomal subunit protein uL2 from Methanosphaera stadtmanae (strain ATCC 43021 / DSM 3091 / JCM 11832 / MCB-3).